The sequence spans 108 residues: Holo-[acyl-carrier-protein] synthase (108 aa).

Aspartate 9 and glutamate 54 together coordinate Mg(2+).

The protein belongs to the P-Pant transferase superfamily. AcpS family. Mg(2+) serves as cofactor.

It localises to the cytoplasm. The enzyme catalyses apo-[ACP] + CoA = holo-[ACP] + adenosine 3',5'-bisphosphate + H(+). In terms of biological role, transfers the 4'-phosphopantetheine moiety from coenzyme A to a Ser of acyl-carrier-protein. The chain is Holo-[acyl-carrier-protein] synthase from Mycoplasmopsis pulmonis (strain UAB CTIP) (Mycoplasma pulmonis).